The chain runs to 660 residues: MKTVVFAYHDMGCLGIEALLAAGYEISAIFTHTDNPGEKAFYGSVARLAAERGIPVYAPDNVNHPLWVERIAQLSPEVIFSFYYRHLICDEILQLAPRGAFNLHGSLLPKYRGRAPLNWVLVNGETETGVTLHRMVKRADAGAIVAQLRVAIAPDDIAITLHHKLCHAARQLLEQTLPAIKHGNILEIAQRENEATCFGRRTPDDSFLEWHKSASVLHNMVRAVADPWPGAFSYVGNQKFTVWSSRVHPHASKAQPGSVISVAPLLIACGDGALEIVTGQAGDGITMQGSQLAQTLGLVQGSRLNSQPACAARRRTRVLILGVNGFIGNHLTERLLCEDHYEVYGLDIGSDAISRFLNHPHFHFVEGDISIHSEWIEYHVKKCDVVLPLVAIATPIEYTRNPLRVFELDFEENLRIIRYCVKYRKRIIFPSTSEVYGMCSDKYFDEDHSNLIVGPVNKPRWIYSVSKQLLDRVIWAYGEKEGLQFTLFRPFNWMGPRLDNLNAARIGSSRAITQLILNLVEGSPIKLIDGGKQKRCFTDIRDGIEALYRIIENAGNRCDGEIINIGNPENEASIEELGEMLLASFEKHPLRHYFPPFAGFRVVESSSYYGKGYQDVEHRKPSIRNARRCLDWEPKIDMQETIDETLDFFLRTVDLTDKPL.

Residues 1–304 (MKTVVFAYHD…TLGLVQGSRL (304 aa)) form a formyltransferase ArnAFT region. Residue 86-88 (HLI) coordinates (6R)-10-formyltetrahydrofolate. The active-site Proton donor; for formyltransferase activity is the histidine 104. (6R)-10-formyltetrahydrofolate is bound by residues arginine 114 and 136–140 (VKRAD). The segment at 314 to 660 (RRTRVLILGV…RTVDLTDKPL (347 aa)) is dehydrogenase ArnADH. Residues aspartate 347 and 368–369 (DI) each bind NAD(+). Residues alanine 393, tyrosine 398, and 432–433 (TS) each bind UDP-alpha-D-glucuronate. Glutamate 434 (proton acceptor; for decarboxylase activity) is an active-site residue. Residues arginine 460, asparagine 492, 526-535 (KLIDGGKQKR), and tyrosine 613 contribute to the UDP-alpha-D-glucuronate site. Arginine 619 serves as the catalytic Proton donor; for decarboxylase activity.

The protein in the N-terminal section; belongs to the Fmt family. UDP-L-Ara4N formyltransferase subfamily. In the C-terminal section; belongs to the NAD(P)-dependent epimerase/dehydratase family. UDP-glucuronic acid decarboxylase subfamily. Homohexamer, formed by a dimer of trimers.

It carries out the reaction UDP-alpha-D-glucuronate + NAD(+) = UDP-beta-L-threo-pentopyranos-4-ulose + CO2 + NADH. The catalysed reaction is UDP-4-amino-4-deoxy-beta-L-arabinose + (6R)-10-formyltetrahydrofolate = UDP-4-deoxy-4-formamido-beta-L-arabinose + (6S)-5,6,7,8-tetrahydrofolate + H(+). Its pathway is nucleotide-sugar biosynthesis; UDP-4-deoxy-4-formamido-beta-L-arabinose biosynthesis; UDP-4-deoxy-4-formamido-beta-L-arabinose from UDP-alpha-D-glucuronate: step 1/3. The protein operates within nucleotide-sugar biosynthesis; UDP-4-deoxy-4-formamido-beta-L-arabinose biosynthesis; UDP-4-deoxy-4-formamido-beta-L-arabinose from UDP-alpha-D-glucuronate: step 3/3. It functions in the pathway bacterial outer membrane biogenesis; lipopolysaccharide biosynthesis. Bifunctional enzyme that catalyzes the oxidative decarboxylation of UDP-glucuronic acid (UDP-GlcUA) to UDP-4-keto-arabinose (UDP-Ara4O) and the addition of a formyl group to UDP-4-amino-4-deoxy-L-arabinose (UDP-L-Ara4N) to form UDP-L-4-formamido-arabinose (UDP-L-Ara4FN). The modified arabinose is attached to lipid A and is required for resistance to polymyxin and cationic antimicrobial peptides. This chain is Bifunctional polymyxin resistance protein ArnA, found in Escherichia coli O6:K15:H31 (strain 536 / UPEC).